We begin with the raw amino-acid sequence, 194 residues long: uncharacterized protein (194 aa).

It belongs to the calycin superfamily. Fatty-acid binding protein (FABP) family.

This is an uncharacterized protein from Caenorhabditis elegans.